The sequence spans 427 residues: Glutamate-1-semialdehyde 2,1-aminomutase (427 aa).

The residue at position 267 (Lys-267) is an N6-(pyridoxal phosphate)lysine.

This sequence belongs to the class-III pyridoxal-phosphate-dependent aminotransferase family. HemL subfamily. Homodimer. Pyridoxal 5'-phosphate is required as a cofactor.

Its subcellular location is the cytoplasm. It catalyses the reaction (S)-4-amino-5-oxopentanoate = 5-aminolevulinate. The protein operates within porphyrin-containing compound metabolism; protoporphyrin-IX biosynthesis; 5-aminolevulinate from L-glutamyl-tRNA(Glu): step 2/2. The sequence is that of Glutamate-1-semialdehyde 2,1-aminomutase from Geobacter metallireducens (strain ATCC 53774 / DSM 7210 / GS-15).